Reading from the N-terminus, the 794-residue chain is Protein transport protein SEC23 G (794 aa).

Zn(2+) is bound by residues C56, C59, C78, and C81. The interval 56-81 (CSRCGAVLNPYARVDYQSRIWSCPFC) is zinc finger-like.

This sequence belongs to the SEC23/SEC24 family. SEC23 subfamily. In terms of assembly, component of the coat protein complex II (COPII), composed of at least five proteins: the Sec23/24 complex, the Sec13/31 complex and Sar1. Interacts with SEC24A.

The protein resides in the cytoplasmic vesicle. It is found in the COPII-coated vesicle membrane. Its subcellular location is the endoplasmic reticulum membrane. The protein localises to the membrane. Its function is as follows. Component of the coat protein complex II (COPII) which promotes the formation of transport vesicles from the endoplasmic reticulum (ER). The coat has two main functions, the physical deformation of the endoplasmic reticulum membrane into vesicles and the selection of cargo molecules. In Arabidopsis thaliana (Mouse-ear cress), this protein is Protein transport protein SEC23 G.